Consider the following 342-residue polypeptide: Cell cycle control protein 50C (342 aa).

Topologically, residues methionine 1–serine 33 are cytoplasmic. A helical membrane pass occupies residues valine 34–leucine 54. The Extracellular segment spans residues leucine 55–glycine 306. Asparagine 66, asparagine 80, asparagine 89, and asparagine 205 each carry an N-linked (GlcNAc...) asparagine glycan. The chain crosses the membrane as a helical span at residues leucine 307 to isoleucine 327. At leucine 328–leucine 342 the chain is on the cytoplasmic side.

The protein belongs to the CDC50/LEM3 family. In terms of tissue distribution, specifically expressed in testis.

The protein resides in the membrane. This is Cell cycle control protein 50C (Tmem30c) from Mus musculus (Mouse).